Reading from the N-terminus, the 408-residue chain is Glutamate N-acetyltransferase (408 aa).

T150, K176, T189, E271, N403, and T408 together coordinate substrate. T189 serves as the catalytic Nucleophile.

This sequence belongs to the ArgJ family. As to quaternary structure, heterotetramer of two alpha and two beta chains.

The protein localises to the cytoplasm. The catalysed reaction is N(2)-acetyl-L-ornithine + L-glutamate = N-acetyl-L-glutamate + L-ornithine. The protein operates within amino-acid biosynthesis; L-arginine biosynthesis; L-ornithine and N-acetyl-L-glutamate from L-glutamate and N(2)-acetyl-L-ornithine (cyclic): step 1/1. Its function is as follows. Catalyzes the transfer of the acetyl group from N(2)-acetylornithine to glutamate, forming N-acetylglutamate and L-ornithine. In Methanococcus vannielii (strain ATCC 35089 / DSM 1224 / JCM 13029 / OCM 148 / SB), this protein is Glutamate N-acetyltransferase.